The primary structure comprises 435 residues: Nuclear receptor subfamily 6 group A member 1 (435 aa).

The nuclear receptor DNA-binding region spans 11–86 (QRACLICGDR…MGMNRKAIRE (76 aa)). NR C4-type zinc fingers lie at residues 14-34 (CLIC…CEGC) and 50-69 (CSRD…CQYC). The disordered stretch occupies residues 84–157 (IREDGMPGGR…VSTPSSSRSM (74 aa)). Residues 121-141 (NTSWSNNGDSDHSSPGNGVSE) show a composition bias toward polar residues. Low complexity predominate over residues 142–156 (SNQPSPVSTPSSSRS). The region spanning 204–435 (QSHTLINQLL…HSCKTSLTKE (232 aa)) is the NR LBD domain.

This sequence belongs to the nuclear hormone receptor family. NR6 subfamily. Homodimer.

The protein resides in the cytoplasm. The protein localises to the nucleus. In terms of biological role, probable orphan nuclear receptor. Binds to a response element containing repeats of the motif 5'-AGGTCA-3'. Required for anterior-posterior patterning during organogenesis. Acts with chordin to play a role in patterning the midbrain-hindbrain. Isoform Em is required for integrin-mediated cell matrix interaction during neurulation and for the morphogenetic movements leading to formation of the neural tube. Also mediates the effect of retinoic acid on primary neurogenesis. The chain is Nuclear receptor subfamily 6 group A member 1 from Xenopus tropicalis (Western clawed frog).